Here is a 1259-residue protein sequence, read N- to C-terminus: Cingulin (1259 aa).

The segment at M9–P324 is head. The ZIM signature appears at Q41–G55. A compositionally biased stretch (basic and acidic residues) spans S69–E79. Disordered stretches follow at residues S69–K151, V169–L232, F317–L338, K941–R969, and R1192–C1259. Positions R80–G100 are enriched in polar residues. Positions S117–S127 are enriched in low complexity. Positions N128–S145 are enriched in polar residues. A compositionally biased stretch (basic and acidic residues) spans A179–E204. A compositionally biased stretch (polar residues) spans V220–R229. The stretch at G325 to K1218 forms a coiled coil. The span at E326 to L338 shows a compositional bias: basic and acidic residues. The segment at I1220–C1259 is tail. The span at D1241–C1259 shows a compositional bias: polar residues.

Belongs to the cingulin family. Parallel homodimer. Interacts with TJP1/ZO1 and TJP2/ZO2.

The protein resides in the cell junction. It localises to the tight junction. In terms of biological role, probably plays a role in the formation and regulation of the tight junction (TJ) paracellular permeability barrier, possibly by linking ZO proteins to the actomyosin cytoskeleton. In Xenopus tropicalis (Western clawed frog), this protein is Cingulin.